The following is a 493-amino-acid chain: Glycerol kinase (493 aa).

T11 contacts ADP. The ATP site is built by T11, T12, and S13. T11 serves as a coordination point for sn-glycerol 3-phosphate. R15 is a binding site for ADP. The sn-glycerol 3-phosphate site is built by R80, E81, Y132, and D241. Positions 80, 81, 132, 241, and 242 each coordinate glycerol. 2 residues coordinate ADP: T263 and G306. Positions 263, 306, 310, and 408 each coordinate ATP. Residue G408 coordinates ADP.

It belongs to the FGGY kinase family.

It carries out the reaction glycerol + ATP = sn-glycerol 3-phosphate + ADP + H(+). Its pathway is polyol metabolism; glycerol degradation via glycerol kinase pathway; sn-glycerol 3-phosphate from glycerol: step 1/1. Its activity is regulated as follows. Inhibited by fructose 1,6-bisphosphate (FBP). Functionally, key enzyme in the regulation of glycerol uptake and metabolism. Catalyzes the phosphorylation of glycerol to yield sn-glycerol 3-phosphate. This is Glycerol kinase from Cereibacter sphaeroides (strain ATCC 17023 / DSM 158 / JCM 6121 / CCUG 31486 / LMG 2827 / NBRC 12203 / NCIMB 8253 / ATH 2.4.1.) (Rhodobacter sphaeroides).